The chain runs to 254 residues: Ubiquinone/menaquinone biosynthesis C-methyltransferase UbiE (254 aa).

S-adenosyl-L-methionine contacts are provided by residues threonine 77, aspartate 98, 126–127 (NA), and serine 143.

This sequence belongs to the class I-like SAM-binding methyltransferase superfamily. MenG/UbiE family.

The catalysed reaction is a 2-demethylmenaquinol + S-adenosyl-L-methionine = a menaquinol + S-adenosyl-L-homocysteine + H(+). The enzyme catalyses a 2-methoxy-6-(all-trans-polyprenyl)benzene-1,4-diol + S-adenosyl-L-methionine = a 5-methoxy-2-methyl-3-(all-trans-polyprenyl)benzene-1,4-diol + S-adenosyl-L-homocysteine + H(+). The protein operates within quinol/quinone metabolism; menaquinone biosynthesis; menaquinol from 1,4-dihydroxy-2-naphthoate: step 2/2. It participates in cofactor biosynthesis; ubiquinone biosynthesis. Its function is as follows. Methyltransferase required for the conversion of demethylmenaquinol (DMKH2) to menaquinol (MKH2) and the conversion of 2-polyprenyl-6-methoxy-1,4-benzoquinol (DDMQH2) to 2-polyprenyl-3-methyl-6-methoxy-1,4-benzoquinol (DMQH2). In Blochmanniella floridana, this protein is Ubiquinone/menaquinone biosynthesis C-methyltransferase UbiE.